A 133-amino-acid chain; its full sequence is p53 and DNA damage-regulated protein 1 (133 aa).

The protein belongs to the prefoldin subunit beta family. As to quaternary structure, component of the PAQosome complex which is responsible for the biogenesis of several protein complexes and which consists of R2TP complex members RUVBL1, RUVBL2, RPAP3 and PIH1D1, URI complex members PFDN2, PFDN6, PDRG1, UXT and URI1 as well as ASDURF, POLR2E and DNAAF10/WDR92.

It localises to the cytoplasm. In terms of biological role, may play a role in chaperone-mediated protein folding. The sequence is that of p53 and DNA damage-regulated protein 1 (Pdrg1) from Mus musculus (Mouse).